Here is a 457-residue protein sequence, read N- to C-terminus: tRNA-2-methylthio-N(6)-dimethylallyladenosine synthase (457 aa).

In terms of domain architecture, MTTase N-terminal spans 8-123 (KKVFIKTFGC…LPEMLARRDA (116 aa)). [4Fe-4S] cluster is bound by residues Cys17, Cys54, Cys86, Cys160, Cys164, and Cys167. Residues 146–379 (RVDGATAFVS…QEAIEANGRR (234 aa)) form the Radical SAM core domain. A TRAM domain is found at 382 to 449 (QSRVGTVQRI…PHSLRGEVLL (68 aa)).

This sequence belongs to the methylthiotransferase family. MiaB subfamily. Monomer. [4Fe-4S] cluster is required as a cofactor.

Its subcellular location is the cytoplasm. It catalyses the reaction N(6)-dimethylallyladenosine(37) in tRNA + (sulfur carrier)-SH + AH2 + 2 S-adenosyl-L-methionine = 2-methylsulfanyl-N(6)-dimethylallyladenosine(37) in tRNA + (sulfur carrier)-H + 5'-deoxyadenosine + L-methionine + A + S-adenosyl-L-homocysteine + 2 H(+). Functionally, catalyzes the methylthiolation of N6-(dimethylallyl)adenosine (i(6)A), leading to the formation of 2-methylthio-N6-(dimethylallyl)adenosine (ms(2)i(6)A) at position 37 in tRNAs that read codons beginning with uridine. This is tRNA-2-methylthio-N(6)-dimethylallyladenosine synthase from Methylibium petroleiphilum (strain ATCC BAA-1232 / LMG 22953 / PM1).